A 603-amino-acid chain; its full sequence is Pyruvate oxidase (603 aa).

The tract at residues 1–191 (MVMKQTKQTN…WYASANSYQT (191 aa)) is core. Positions 192–342 (PLLPEPDVQA…ILAQVSERES (151 aa)) are FAD-binding. The interval 343–603 (TPWWQANLAN…LQHQIGQGGF (261 aa)) is thiamine pyrophosphate binding. Residues Asp-447, Asn-474, and Gln-476 each contribute to the Mg(2+) site.

This sequence belongs to the TPP enzyme family. In terms of assembly, homotetramer. FAD is required as a cofactor. Mg(2+) serves as cofactor. Requires thiamine diphosphate as cofactor.

It catalyses the reaction pyruvate + phosphate + O2 + H(+) = acetyl phosphate + H2O2 + CO2. In terms of biological role, important for the aerobic growth. Decarboxylates pyruvate in four steps. The energy released is partially stored in acetyl phosphate. The sequence is that of Pyruvate oxidase (pox5) from Lactiplantibacillus plantarum (strain ATCC BAA-793 / NCIMB 8826 / WCFS1) (Lactobacillus plantarum).